The sequence spans 548 residues: Probable malate:quinone oxidoreductase (548 aa).

The tract at residues 521-548 is disordered; the sequence is DKPQAADSTPKPQLKPQPVQKEVADIAL. The segment covering 530 to 541 has biased composition (low complexity); sequence PKPQLKPQPVQK.

The protein belongs to the MQO family. FAD serves as cofactor.

The catalysed reaction is (S)-malate + a quinone = a quinol + oxaloacetate. The protein operates within carbohydrate metabolism; tricarboxylic acid cycle; oxaloacetate from (S)-malate (quinone route): step 1/1. This Escherichia coli O17:K52:H18 (strain UMN026 / ExPEC) protein is Probable malate:quinone oxidoreductase.